Reading from the N-terminus, the 369-residue chain is uncharacterized protein (369 aa).

The protein belongs to the Gfo/Idh/MocA family.

This is an uncharacterized protein from Schizosaccharomyces pombe (strain 972 / ATCC 24843) (Fission yeast).